The sequence spans 464 residues: uncharacterized protein (464 aa).

12 helical membrane-spanning segments follow: residues 7–27 (VLNVFSLVMINVIAVDSLRTL), 37–57 (LVFYYIFAALTFFIPVALVAA), 94–114 (VVWYPTMLAFIAATLSYLIAP), 121–141 (FYLLGTALTLFWVFTFLNCFG), 153–173 (ASIGTLLPMIVIIVLGAVWIF), 196–216 (LSLFSAVLFGLIGMEMSAVHA), 231–251 (FYSALLIISTLSLGSLAIVIV), 282–302 (VIAVLIILGGLSGVSAWIIGP), 329–349 (VAILLTQGVIFTVLSTVFILL), 359–379 (LSDLSAQMALLVYIMMFAAAI), 401–421 (MSLISGIGIICCIAAMIVGFI), and 432–452 (FLFECFLIGGLILFVFIPWLF).

The protein belongs to the amino acid-polyamine-organocation (APC) superfamily.

The protein resides in the cell membrane. This is an uncharacterized protein from Legionella pneumophila subsp. pneumophila (strain Philadelphia 1 / ATCC 33152 / DSM 7513).